Reading from the N-terminus, the 728-residue chain is 1,4-alpha-glucan branching enzyme GlgB (728 aa).

Catalysis depends on D405, which acts as the Nucleophile. E458 serves as the catalytic Proton donor.

This sequence belongs to the glycosyl hydrolase 13 family. GlgB subfamily. In terms of assembly, monomer.

It catalyses the reaction Transfers a segment of a (1-&gt;4)-alpha-D-glucan chain to a primary hydroxy group in a similar glucan chain.. It functions in the pathway glycan biosynthesis; glycogen biosynthesis. Functionally, catalyzes the formation of the alpha-1,6-glucosidic linkages in glycogen by scission of a 1,4-alpha-linked oligosaccharide from growing alpha-1,4-glucan chains and the subsequent attachment of the oligosaccharide to the alpha-1,6 position. In Salmonella paratyphi A (strain ATCC 9150 / SARB42), this protein is 1,4-alpha-glucan branching enzyme GlgB.